Consider the following 300-residue polypeptide: Succinate--CoA ligase [ADP-forming] subunit alpha (300 aa).

Residues 17–20 (TGST), Lys-43, and 96–98 (ITE) contribute to the CoA site. Tyr-159 provides a ligand contact to substrate. His-247 acts as the Tele-phosphohistidine intermediate in catalysis.

It belongs to the succinate/malate CoA ligase alpha subunit family. In terms of assembly, heterotetramer of two alpha and two beta subunits.

It carries out the reaction succinate + ATP + CoA = succinyl-CoA + ADP + phosphate. The enzyme catalyses GTP + succinate + CoA = succinyl-CoA + GDP + phosphate. It participates in carbohydrate metabolism; tricarboxylic acid cycle; succinate from succinyl-CoA (ligase route): step 1/1. Succinyl-CoA synthetase functions in the citric acid cycle (TCA), coupling the hydrolysis of succinyl-CoA to the synthesis of either ATP or GTP and thus represents the only step of substrate-level phosphorylation in the TCA. The alpha subunit of the enzyme binds the substrates coenzyme A and phosphate, while succinate binding and nucleotide specificity is provided by the beta subunit. The protein is Succinate--CoA ligase [ADP-forming] subunit alpha of Bacillus subtilis (strain 168).